The primary structure comprises 341 residues: Phosphoribosylformylglycinamidine cyclo-ligase (341 aa).

It belongs to the AIR synthase family.

The protein localises to the cytoplasm. It carries out the reaction 2-formamido-N(1)-(5-O-phospho-beta-D-ribosyl)acetamidine + ATP = 5-amino-1-(5-phospho-beta-D-ribosyl)imidazole + ADP + phosphate + H(+). It participates in purine metabolism; IMP biosynthesis via de novo pathway; 5-amino-1-(5-phospho-D-ribosyl)imidazole from N(2)-formyl-N(1)-(5-phospho-D-ribosyl)glycinamide: step 2/2. The protein is Phosphoribosylformylglycinamidine cyclo-ligase of Xanthomonas axonopodis pv. citri (strain 306).